A 423-amino-acid chain; its full sequence is Maintenance of mitochondrial morphology protein 1 (423 aa).

Over methionine 1–glycine 15 the chain is Lumenal. A helical membrane pass occupies residues leucine 16–phenylalanine 36. Residues glycine 37–alanine 423 lie on the Cytoplasmic side of the membrane. The 213-residue stretch at glutamine 110–proline 322 folds into the SMP-LTD domain. Disordered regions lie at residues arginine 327–threonine 370 and serine 394–alanine 423. Basic and acidic residues predominate over residues arginine 350 to glutamate 367.

The protein belongs to the MMM1 family. In terms of assembly, homodimer. Component of the ER-mitochondria encounter structure (ERMES) or MDM complex, composed of mmm1, mdm10, mdm12 and mdm34. A mmm1 homodimer associates with one molecule of mdm12 on each side in a pairwise head-to-tail manner, and the SMP-LTD domains of mmm1 and mdm12 generate a continuous hydrophobic tunnel for phospholipid trafficking.

The protein resides in the endoplasmic reticulum membrane. Component of the ERMES/MDM complex, which serves as a molecular tether to connect the endoplasmic reticulum (ER) and mitochondria. Components of this complex are involved in the control of mitochondrial shape and protein biogenesis, and function in nonvesicular lipid trafficking between the ER and mitochondria. The mdm12-mmm1 subcomplex functions in the major beta-barrel assembly pathway that is responsible for biogenesis of all outer membrane beta-barrel proteins, and acts in a late step after the SAM complex. The mdm10-mdm12-mmm1 subcomplex further acts in the TOM40-specific pathway after the action of the mdm12-mmm1 complex. Essential for establishing and maintaining the structure of mitochondria and maintenance of mtDNA nucleoids. This is Maintenance of mitochondrial morphology protein 1 from Sclerotinia sclerotiorum (strain ATCC 18683 / 1980 / Ss-1) (White mold).